We begin with the raw amino-acid sequence, 88 residues long: Small ribosomal subunit protein uS19 (88 aa).

Belongs to the universal ribosomal protein uS19 family.

Protein S19 forms a complex with S13 that binds strongly to the 16S ribosomal RNA. The polypeptide is Small ribosomal subunit protein uS19 (Carsonella ruddii (strain PV)).